A 473-amino-acid polypeptide reads, in one-letter code: MKTLYSLRRFYHVETLFNGTLALTGRDQETTGFAWWAGNARLINLSGKLLGAHVAHAGLIVFWAGAMNLFEVAHFVPEKPMYEQGLILLPHLATLGWGVGPGGEVIDTFPYFVSGVLHLISSAVLGFGGIYHALLGPETLEESFPFFGYVWKDRNKMTTILGIHLILLGIGAFLLVFKASYFGGIYDTWAPGGGDVRKITNLTLSPSIIFGYLLKSPFGGEGWIVSVDDLEDIIGGHVWLGSICILGGIWHILTKPFAWARRALVWSGEAYLSYSLGALAVFGFIACCFVWFNNTAYPSEFYGPTGPEASQAQAFTFLVRDQRLGANVGSAQGPTGLGKYLMRSPTGEVIFGGETMRFWDLRAPWLEPLRGPNGLDLSRLKKDIQPWQERRSAEYMTHAPLGSLNSVGGVATEINAVNYVSPRSWLATSHFVLGFFLFVGHLWHAGRARAAAAGFEKGIDRDFEPVLSMTPLN.

The propeptide occupies 1 to 14; that stretch reads MKTLYSLRRFYHVE. At Thr-15 the chain carries N-acetylthreonine. Position 15 is a phosphothreonine (Thr-15). A run of 5 helical transmembrane segments spans residues 69–93, 134–155, 178–200, 255–275, and 291–312; these read LFEVAHFVPEKPMYEQGLILLPHLA, LLGPETLEESFPFFGYVWKDRN, KASYFGGIYDTWAPGGGDVRKIT, KPFAWARRALVWSGEAYLSYS, and WFNNTAYPSEFYGPTGPEASQA. Glu-367 contributes to the [CaMn4O5] cluster binding site. A helical transmembrane segment spans residues 447–471; that stretch reads RARAAAAGFEKGIDRDFEPVLSMTP.

It belongs to the PsbB/PsbC family. PsbC subfamily. PSII is composed of 1 copy each of membrane proteins PsbA, PsbB, PsbC, PsbD, PsbE, PsbF, PsbH, PsbI, PsbJ, PsbK, PsbL, PsbM, PsbT, PsbX, PsbY, PsbZ, Psb30/Ycf12, at least 3 peripheral proteins of the oxygen-evolving complex and a large number of cofactors. It forms dimeric complexes. Binds multiple chlorophylls and provides some of the ligands for the Ca-4Mn-5O cluster of the oxygen-evolving complex. It may also provide a ligand for a Cl- that is required for oxygen evolution. PSII binds additional chlorophylls, carotenoids and specific lipids. serves as cofactor.

The protein localises to the plastid. Its subcellular location is the chloroplast thylakoid membrane. In terms of biological role, one of the components of the core complex of photosystem II (PSII). It binds chlorophyll and helps catalyze the primary light-induced photochemical processes of PSII. PSII is a light-driven water:plastoquinone oxidoreductase, using light energy to abstract electrons from H(2)O, generating O(2) and a proton gradient subsequently used for ATP formation. This Cicer arietinum (Chickpea) protein is Photosystem II CP43 reaction center protein.